An 82-amino-acid polypeptide reads, in one-letter code: Turripeptide Gsp9.1 (82 aa).

An N-terminal signal peptide occupies residues 1-23 (MMAKLMITVMMVLLLSLQQGADG). Residues 24-46 (RSKRWRKNQMAASSIMRNLITAR) constitute a propeptide that is removed on maturation. Residues Pro49 and Pro50 each carry the 4-hydroxyproline modification. 3 disulfides stabilise this stretch: Cys53–Cys68, Cys58–Cys72, and Cys64–Cys79. 4-carboxyglutamate is present on residues Glu60 and Glu63.

It belongs to the Pg turripeptide superfamily. In terms of tissue distribution, expressed by the venom duct.

Its subcellular location is the secreted. The chain is Turripeptide Gsp9.1 from Gemmula speciosa (Splendid gem-turris).